The following is a 256-amino-acid chain: Minor capsid protein P7 (256 aa).

2 hydrophobic regions span residues 24 to 44 and 47 to 67; these read LLFASTWLYINNYILLSIIMK and TKHMILLGFVAVVVVFIIFML. Intrachain disulfides connect C120–C134, C156–C172, and C188–C211.

Interacts with the major capsid protein. Stabilized by 3 intramolecular disulfide bonds.

The protein resides in the virion. One of the minor capsid proteins that constitute a network internal to the major capsid proteins and outside the lipid membrane. The minor capsid proteins glue and stabilize the capsomers. This is Minor capsid protein P7 from Paramecium bursaria Chlorella virus 1 (PBCV-1).